The primary structure comprises 535 residues: T-complex protein 1 subunit epsilon (535 aa).

Belongs to the TCP-1 chaperonin family. As to quaternary structure, heterooligomeric complex of about 850 to 900 kDa that forms two stacked rings, 12 to 16 nm in diameter.

The protein resides in the cytoplasm. Its function is as follows. Molecular chaperone; assists the folding of proteins upon ATP hydrolysis. Known to play a role, in vitro, in the folding of actin and tubulin. The protein is T-complex protein 1 subunit epsilon of Avena sativa (Oat).